Reading from the N-terminus, the 423-residue chain is Gamma-glutamyl phosphate reductase (423 aa).

Belongs to the gamma-glutamyl phosphate reductase family.

It localises to the cytoplasm. The enzyme catalyses L-glutamate 5-semialdehyde + phosphate + NADP(+) = L-glutamyl 5-phosphate + NADPH + H(+). It participates in amino-acid biosynthesis; L-proline biosynthesis; L-glutamate 5-semialdehyde from L-glutamate: step 2/2. Catalyzes the NADPH-dependent reduction of L-glutamate 5-phosphate into L-glutamate 5-semialdehyde and phosphate. The product spontaneously undergoes cyclization to form 1-pyrroline-5-carboxylate. The protein is Gamma-glutamyl phosphate reductase of Pseudomonas putida (strain GB-1).